Consider the following 615-residue polypeptide: Membrane protein insertase YidC (615 aa).

5 helical membrane-spanning segments follow: residues 9–29, 384–404, 458–478, 516–536, and 556–576; these read LMFIVSAFAILIGYQFFVLGP, LVGNFGLAILLLTVVLKLVLY, LPMLIQIPVFYALYKVLTVTI, LIGAMIAHLGVWPLLYGFTMW, and WFPVIFTFTLSGFAVGLVIYW.

The protein belongs to the OXA1/ALB3/YidC family. Type 1 subfamily. As to quaternary structure, interacts with the Sec translocase complex via SecD. Specifically interacts with transmembrane segments of nascent integral membrane proteins during membrane integration.

It is found in the cell inner membrane. In terms of biological role, required for the insertion and/or proper folding and/or complex formation of integral membrane proteins into the membrane. Involved in integration of membrane proteins that insert both dependently and independently of the Sec translocase complex, as well as at least some lipoproteins. Aids folding of multispanning membrane proteins. This chain is Membrane protein insertase YidC, found in Caulobacter vibrioides (strain ATCC 19089 / CIP 103742 / CB 15) (Caulobacter crescentus).